A 642-amino-acid chain; its full sequence is 1,4-alpha-glucan branching enzyme GlgB (642 aa).

The active-site Nucleophile is the Asp-304. The Proton donor role is filled by Glu-355.

It belongs to the glycosyl hydrolase 13 family. GlgB subfamily. In terms of assembly, monomer.

It catalyses the reaction Transfers a segment of a (1-&gt;4)-alpha-D-glucan chain to a primary hydroxy group in a similar glucan chain.. The protein operates within glycan biosynthesis; glycogen biosynthesis. Its function is as follows. Catalyzes the formation of the alpha-1,6-glucosidic linkages in glycogen by scission of a 1,4-alpha-linked oligosaccharide from growing alpha-1,4-glucan chains and the subsequent attachment of the oligosaccharide to the alpha-1,6 position. This Streptococcus pneumoniae serotype 2 (strain D39 / NCTC 7466) protein is 1,4-alpha-glucan branching enzyme GlgB.